The chain runs to 173 residues: GTP-dependent dephospho-CoA kinase (173 aa).

Residues D52, V53, V54, D71, K73, and D122 each contribute to the GTP site.

Belongs to the GTP-dependent DPCK family.

It carries out the reaction 3'-dephospho-CoA + GTP = GDP + CoA + H(+). The protein operates within cofactor biosynthesis; coenzyme A biosynthesis. Catalyzes the GTP-dependent phosphorylation of the 3'-hydroxyl group of dephosphocoenzyme A to form coenzyme A (CoA). In Metallosphaera sedula (strain ATCC 51363 / DSM 5348 / JCM 9185 / NBRC 15509 / TH2), this protein is GTP-dependent dephospho-CoA kinase.